Here is a 456-residue protein sequence, read N- to C-terminus: Hydroxymethylglutaryl coenzyme A synthase (456 aa).

A34 provides a ligand contact to (3S)-3-hydroxy-3-methylglutaryl-CoA. E85 acts as the Proton donor/acceptor in catalysis. Residues C119, T161, S211, H258, K267, N335, and S369 each coordinate (3S)-3-hydroxy-3-methylglutaryl-CoA. The active-site Acyl-thioester intermediate is C119. H258 (proton donor/acceptor) is an active-site residue.

The protein belongs to the thiolase-like superfamily. HMG-CoA synthase family.

The catalysed reaction is acetoacetyl-CoA + acetyl-CoA + H2O = (3S)-3-hydroxy-3-methylglutaryl-CoA + CoA + H(+). In terms of biological role, HMG-CoA synthase; part of the gene cluster that mediates the biosynthesis of 1233A, a natural compound known as an inhibitor of HMG-CoA synthase in the mevalonate pathway and with antibacterial and antifungal activities. This enzyme condenses acetyl-CoA with acetoacetyl-CoA to form HMG-CoA, which is the substrate for HMG-CoA reductase. As part of the 1233A biosynthesis cluster, is involved in conferring self-resistance to 1233A. The polypeptide is Hydroxymethylglutaryl coenzyme A synthase (Fusarium sp).